The following is a 443-amino-acid chain: Oxygen-dependent coproporphyrinogen-III oxidase, mitochondrial (443 aa).

A mitochondrion-targeting transit peptide spans 1 to 98; it reads MALRLGRLGS…EMVPKSSGAR (98 aa). Residues 89–112 are disordered; it reads EMVPKSSGARSPSPGRREEDGDEL. Serine 101 carries the post-translational modification Phosphoserine. The span at 103–112 shows a compositional bias: basic and acidic residues; sequence GRREEDGDEL. The segment at 182–191 is important for dimerization; it reads VLQDGRVFEK. Serine 233 contacts coproporphyrinogen III. Histidine 247 serves as the catalytic Proton donor. 249-251 contributes to the coproporphyrinogen III binding site; it reads NYR. Residues 381-417 form an important for dimerization region; sequence YVEFNLLYDRGTKFGLFTPGSRIESILMSLPLTARWE. An N6-acetyllysine; alternate modification is found at lysine 393. An N6-succinyllysine; alternate modification is found at lysine 393. 400-402 is a binding site for coproporphyrinogen III; it reads GSR.

It belongs to the aerobic coproporphyrinogen-III oxidase family. In terms of assembly, homodimer. Expressed in erythroid cells. Expressed in liver.

It is found in the mitochondrion intermembrane space. The catalysed reaction is coproporphyrinogen III + O2 + 2 H(+) = protoporphyrinogen IX + 2 CO2 + 2 H2O. It functions in the pathway porphyrin-containing compound metabolism; protoporphyrin-IX biosynthesis; protoporphyrinogen-IX from coproporphyrinogen-III (O2 route): step 1/1. Functionally, involved in the heme biosynthesis. Catalyzes the aerobic oxidative decarboxylation of propionate groups of rings A and B of coproporphyrinogen-III to yield the vinyl groups in protoporphyrinogen-IX. The protein is Oxygen-dependent coproporphyrinogen-III oxidase, mitochondrial (Cpox) of Mus musculus (Mouse).